The sequence spans 123 residues: Ribosome-binding factor A (123 aa).

The protein belongs to the RbfA family. In terms of assembly, monomer. Binds 30S ribosomal subunits, but not 50S ribosomal subunits or 70S ribosomes.

It is found in the cytoplasm. One of several proteins that assist in the late maturation steps of the functional core of the 30S ribosomal subunit. Associates with free 30S ribosomal subunits (but not with 30S subunits that are part of 70S ribosomes or polysomes). Required for efficient processing of 16S rRNA. May interact with the 5'-terminal helix region of 16S rRNA. This Magnetococcus marinus (strain ATCC BAA-1437 / JCM 17883 / MC-1) protein is Ribosome-binding factor A.